The primary structure comprises 245 residues: Type III pantothenate kinase (245 aa).

An ATP-binding site is contributed by 6–13; the sequence is DQGNTILK. Substrate contacts are provided by residues Y86 and 93-96; that span reads GTDR. D95 functions as the Proton acceptor in the catalytic mechanism. A K(+)-binding site is contributed by D116. An ATP-binding site is contributed by T119. T171 lines the substrate pocket.

The protein belongs to the type III pantothenate kinase family. In terms of assembly, homodimer. NH4(+) is required as a cofactor. K(+) serves as cofactor.

The protein localises to the cytoplasm. The catalysed reaction is (R)-pantothenate + ATP = (R)-4'-phosphopantothenate + ADP + H(+). Its pathway is cofactor biosynthesis; coenzyme A biosynthesis; CoA from (R)-pantothenate: step 1/5. In terms of biological role, catalyzes the phosphorylation of pantothenate (Pan), the first step in CoA biosynthesis. This chain is Type III pantothenate kinase, found in Azobacteroides pseudotrichonymphae genomovar. CFP2.